Consider the following 258-residue polypeptide: Triosephosphate isomerase (258 aa).

9 to 11 serves as a coordination point for substrate; the sequence is NWK. Catalysis depends on His-95, which acts as the Electrophile. The active-site Proton acceptor is the Glu-167. Substrate contacts are provided by Gly-173 and Ser-212.

The protein belongs to the triosephosphate isomerase family. As to quaternary structure, homodimer.

It is found in the cytoplasm. It carries out the reaction D-glyceraldehyde 3-phosphate = dihydroxyacetone phosphate. It functions in the pathway carbohydrate biosynthesis; gluconeogenesis. It participates in carbohydrate degradation; glycolysis; D-glyceraldehyde 3-phosphate from glycerone phosphate: step 1/1. Involved in the gluconeogenesis. Catalyzes stereospecifically the conversion of dihydroxyacetone phosphate (DHAP) to D-glyceraldehyde-3-phosphate (G3P). The sequence is that of Triosephosphate isomerase from Blochmanniella pennsylvanica (strain BPEN).